Consider the following 207-residue polypeptide: Large ribosomal subunit protein uL4 (207 aa).

Positions 50-76 (AVKNRSAVSGGGRKPWKQKGTGRARQG) are disordered.

The protein belongs to the universal ribosomal protein uL4 family. As to quaternary structure, part of the 50S ribosomal subunit.

Its function is as follows. One of the primary rRNA binding proteins, this protein initially binds near the 5'-end of the 23S rRNA. It is important during the early stages of 50S assembly. It makes multiple contacts with different domains of the 23S rRNA in the assembled 50S subunit and ribosome. In terms of biological role, forms part of the polypeptide exit tunnel. The protein is Large ribosomal subunit protein uL4 of Macrococcus caseolyticus (strain JCSC5402) (Macrococcoides caseolyticum).